The following is a 119-amino-acid chain: Na(+)/H(+) antiporter subunit G (119 aa).

3 helical membrane-spanning segments follow: residues 7 to 29, 44 to 61, and 66 to 88; these read IISI…IIRF, TLGV…FFLV, and VGKL…MMMG.

Belongs to the CPA3 antiporters (TC 2.A.63) subunit G family. As to quaternary structure, forms a heterooligomeric complex that consists of seven subunits: MrpA, MrpB, MrpC, MrpD, MrpE, MrpF and MrpG.

It localises to the cell membrane. In terms of biological role, mnh complex is a Na(+)Li(+)/H(+) antiporter involved in Na(+) and/or Li(+) excretion and Na(+) resistance. Na(+)/H(+) antiport consumes a transmembrane electrical potential, and is thus inferred to be electrogenic. Does not transport K(+), Ca(2+) or Mg(2+). The protein is Na(+)/H(+) antiporter subunit G (mrpG) of Alkalihalophilus pseudofirmus (strain ATCC BAA-2126 / JCM 17055 / OF4) (Bacillus pseudofirmus).